The sequence spans 164 residues: 16S rRNA aminocarboxypropyltransferase (164 aa).

Positions 18, 66, 87, and 106 each coordinate S-adenosyl-L-methionine.

The protein belongs to the TDD superfamily. TSR3 family.

Its subcellular location is the cytoplasm. It catalyses the reaction an N(1)-methylpseudouridine in rRNA + S-adenosyl-L-methionine = N(1)-methyl-N(3)-[(3S)-3-amino-3-carboxypropyl]pseudouridine in rRNA + S-methyl-5'-thioadenosine + H(+). Its function is as follows. Aminocarboxypropyltransferase that catalyzes the aminocarboxypropyl transfer on pseudouridine corresponding to position 914 in M.jannaschii 16S rRNA. It constitutes the last step in biosynthesis of the hypermodified N1-methyl-N3-(3-amino-3-carboxypropyl) pseudouridine (m1acp3-Psi). The protein is 16S rRNA aminocarboxypropyltransferase of Thermoplasma volcanium (strain ATCC 51530 / DSM 4299 / JCM 9571 / NBRC 15438 / GSS1).